The primary structure comprises 53 residues: UPF0391 membrane protein Bxeno_A1464 (53 aa).

The next 2 helical transmembrane spans lie at 5–25 (AAIFFIIAIIAAVFGFGGIAA) and 30–50 (IAKVLFFIFVVIFLVTLLMGV).

Belongs to the UPF0391 family.

It is found in the cell membrane. The protein is UPF0391 membrane protein Bxeno_A1464 of Paraburkholderia xenovorans (strain LB400).